Consider the following 713-residue polypeptide: Forkhead box protein P2 (713 aa).

The segment covering 1 to 28 has biased composition (polar residues); that stretch reads MMQESVTETISNSSMNQNGMSTLSSQLD. Disordered regions lie at residues 1-44 and 279-337; these read MMQE…SSEV and DNGI…TGAS. Over residues 290–303 the composition is skewed to low complexity; that stretch reads TTNNSSSTTSSTTS. Polar residues predominate over residues 313–322; the sequence is SIVNGQSSVL. Positions 324–335 are enriched in basic and acidic residues; that stretch reads ARRDSSSHEETG. The C2H2-type zinc-finger motif lies at 344–369; the sequence is GVCKWPGCESICEDFGQFLKHLNNEH. The tract at residues 386 to 407 is leucine-zipper; sequence VQQLEIQLSKERERLQAMMTHL. A CTBP1-binding region spans residues 420–424; that stretch reads PLNLV. Low complexity predominate over residues 436 to 457; that stretch reads TSPQSLPQTPTTPTAPVTPITQ. The segment at 436 to 463 is disordered; sequence TSPQSLPQTPTTPTAPVTPITQGPSVIT. Residues 502 to 592 constitute a DNA-binding region (fork-head); sequence RPPFTYATLI…SQKITGSPTL (91 aa). Disordered regions lie at residues 647 to 666 and 676 to 713; these read LDHIDSNGNSSPGCSPQPHI and VIAEDEDCPMSLVTTANHSPELEDDREIEEEPLSEDLE. The segment covering 697–713 has biased composition (acidic residues); sequence LEDDREIEEEPLSEDLE.

In terms of assembly, forms homodimers and heterodimers with FOXP1 and FOXP4. Dimerization is required for DNA-binding. Interacts with CTBP1. Interacts with FOXP1. Interacts with TBR1. Interacts with ZMYM2.

It localises to the nucleus. Its function is as follows. Transcriptional repressor that may play a role in the specification and differentiation of lung epithelium. May also play a role in developing neural, gastrointestinal and cardiovascular tissues. Can act with CTBP1 to synergistically repress transcription but CTPBP1 is not essential. Plays a role in synapse formation by regulating SRPX2 levels. The chain is Forkhead box protein P2 (FOXP2) from Pongo pygmaeus (Bornean orangutan).